A 504-amino-acid polypeptide reads, in one-letter code: Glucan endo-1,3-beta-glucosidase 7 (504 aa).

Residues Met-1 to Ala-22 form the signal peptide. Residue Glu-119 is the Proton donor of the active site. Glu-264 acts as the Nucleophile in catalysis. Cys-365 and Cys-427 are joined by a disulfide.

This sequence belongs to the glycosyl hydrolase 17 family. Contains two additional disulfide bonds.

It is found in the secreted. The protein resides in the cell wall. The catalysed reaction is Hydrolysis of (1-&gt;3)-beta-D-glucosidic linkages in (1-&gt;3)-beta-D-glucans.. The protein is Glucan endo-1,3-beta-glucosidase 7 of Arabidopsis thaliana (Mouse-ear cress).